Reading from the N-terminus, the 122-residue chain is Large ribosomal subunit protein uL14 (122 aa).

This sequence belongs to the universal ribosomal protein uL14 family. As to quaternary structure, part of the 50S ribosomal subunit. Forms a cluster with proteins L3 and L19. In the 70S ribosome, L14 and L19 interact and together make contacts with the 16S rRNA in bridges B5 and B8.

In terms of biological role, binds to 23S rRNA. Forms part of two intersubunit bridges in the 70S ribosome. The protein is Large ribosomal subunit protein uL14 of Leptothrix cholodnii (strain ATCC 51168 / LMG 8142 / SP-6) (Leptothrix discophora (strain SP-6)).